Reading from the N-terminus, the 396-residue chain is MVRVVMTYADRWLLPEGVEEILPGEAKAIDSLRRKLLDLYSAWGYDMVIPPLLEYTDSLLTGSGRDIDLLTLKVTDQLSGRTLGIRADITPQTARMDAHSFNRQGANRLCYAGHVVHARPKNPLATRTPIQAGIEFYGEADLAADIEVVSLLLESLQVAGLPRLHIDLGHVGIYRAIANDAGLTTAQEQEFFELLQRKAVTEIHAWVEANIPSADKAAAFILLPSLAGGIEVLDRARSQFAHLPQVIDALDHLQQLAAVVMARYPSAELYFDLGEVRGYHYLTGIVFAAFAPGYGNPIASGGRYDHIGEVFGRARPATGFAVDITALSKLGFIGQHDVSAIAVEVNQDPQQWAAIKALRARGERVIQLTPAGQLAELKCDRQLLLLDGKYQVVPLQ.

Belongs to the class-II aminoacyl-tRNA synthetase family. HisZ subfamily. In terms of assembly, heteromultimer composed of HisG and HisZ subunits.

It localises to the cytoplasm. It participates in amino-acid biosynthesis; L-histidine biosynthesis; L-histidine from 5-phospho-alpha-D-ribose 1-diphosphate: step 1/9. Its function is as follows. Required for the first step of histidine biosynthesis. May allow the feedback regulation of ATP phosphoribosyltransferase activity by histidine. This is ATP phosphoribosyltransferase regulatory subunit from Cellvibrio japonicus (strain Ueda107) (Pseudomonas fluorescens subsp. cellulosa).